The chain runs to 410 residues: Tryptophan synthase beta chain (410 aa).

The residue at position 98 (K98) is an N6-(pyridoxal phosphate)lysine.

Belongs to the TrpB family. In terms of assembly, tetramer of two alpha and two beta chains. Requires pyridoxal 5'-phosphate as cofactor.

The enzyme catalyses (1S,2R)-1-C-(indol-3-yl)glycerol 3-phosphate + L-serine = D-glyceraldehyde 3-phosphate + L-tryptophan + H2O. Its pathway is amino-acid biosynthesis; L-tryptophan biosynthesis; L-tryptophan from chorismate: step 5/5. In terms of biological role, the beta subunit is responsible for the synthesis of L-tryptophan from indole and L-serine. In Dinoroseobacter shibae (strain DSM 16493 / NCIMB 14021 / DFL 12), this protein is Tryptophan synthase beta chain.